Here is a 717-residue protein sequence, read N- to C-terminus: Probable inactive histone-lysine N-methyltransferase SUVR2 (717 aa).

The span at Gln61–Glu73 shows a compositional bias: basic and acidic residues. A disordered region spans residues Gln61–Ser136. A compositionally biased stretch (low complexity) spans Ser120 to Pro130. The Zn(2+) site is built by Cys445, Cys446, Cys449, Cys453, Cys462, Cys529, Cys533, Cys535, and Cys539. In terms of domain architecture, Pre-SET spans Met458–Gly547. The SET domain occupies Asn550–Gly679. S-adenosyl-L-methionine is bound by residues Arg561–Trp563 and Asn635–His636. Zn(2+) is bound at residue Cys638. Residue Tyr678 participates in S-adenosyl-L-methionine binding. Residues Ser690–Gln706 form the Post-SET domain. 3 residues coordinate Zn(2+): Cys694, Cys696, and Cys701.

The protein belongs to the class V-like SAM-binding methyltransferase superfamily. Histone-lysine methyltransferase family. As to quaternary structure, interacts with SUVR1, CHR19, CHR28 and itself. Interacts with CHR27.

The protein localises to the nucleus. The protein resides in the chromosome. Its function is as follows. Probable inactive histone-lysine methyltransferase that acts as regulator of transctiptional gene silencing independently of histone H3K9 methylation. Contributes to transcriptional gene silencing at RNA-directed DNA methylation (RdDM) target loci but also at RdDM-independent target loci. Forms a complex with SUVR1 and associates with the SNF2-related chromatin-remodeling proteins CHR19, CHR27, and CHR28, thereby mediating nucleosome positioning and transcriptional silencing. Does not possess histone-lysine methyltransferase activity in vitro, and the conserved catalytic sites of SUVR2 are dispensable for its function in transcriptional gene silencing. The chain is Probable inactive histone-lysine N-methyltransferase SUVR2 (SUVR2) from Arabidopsis thaliana (Mouse-ear cress).